The following is a 205-amino-acid chain: Adenylyl-sulfate kinase (205 aa).

ATP is bound at residue 31–38 (GLSGAGKS). Residue S105 is the Phosphoserine intermediate of the active site.

Belongs to the APS kinase family.

The enzyme catalyses adenosine 5'-phosphosulfate + ATP = 3'-phosphoadenylyl sulfate + ADP + H(+). The protein operates within sulfur metabolism; hydrogen sulfide biosynthesis; sulfite from sulfate: step 2/3. Its function is as follows. Catalyzes the synthesis of activated sulfate. The chain is Adenylyl-sulfate kinase from Shewanella baltica (strain OS155 / ATCC BAA-1091).